Reading from the N-terminus, the 392-residue chain is Speckle-type POZ protein-like (392 aa).

The 131-residue stretch at 31 to 161 folds into the MATH domain; it reads KFSYMWTINN…DDKLTLYCEV (131 aa). The region spanning 200 to 267 is the BTB domain; sequence TDCSLFVEGK…IYTGGTPHVD (68 aa).

This sequence belongs to the Tdpoz family. As to quaternary structure, homodimer. Heterodimer with SPOP. Component of cullin-RING-based BCR (BTB-CUL3-RBX1) E3 ubiquitin-protein ligase complexes containing homodimeric SPOPL or the heterodimer formed by SPOP and SPOPL.

Its subcellular location is the nucleus. It participates in protein modification; protein ubiquitination. In terms of biological role, component of a cullin-RING-based BCR (BTB-CUL3-RBX1) E3 ubiquitin-protein ligase complex that mediates the ubiquitination and subsequent proteasomal degradation of target proteins, but with relatively low efficiency. The polypeptide is Speckle-type POZ protein-like (spopl) (Xenopus laevis (African clawed frog)).